A 797-amino-acid chain; its full sequence is Probable exo-1,4-beta-xylosidase xlnD (797 aa).

Residues 1 to 20 (MPGAASIVAVLAALLPTALG) form the signal peptide. N-linked (GlcNAc...) asparagine glycans are attached at residues Asn-23, Asn-87, Asn-142, and Asn-237. Asp-310 is a catalytic residue. Residues Asn-326, Asn-391, Asn-404, Asn-442, Asn-479, Asn-521, Asn-617, Asn-644, Asn-657, Asn-684, and Asn-706 are each glycosylated (N-linked (GlcNAc...) asparagine).

Belongs to the glycosyl hydrolase 3 family.

The protein resides in the secreted. The enzyme catalyses Hydrolysis of (1-&gt;4)-beta-D-xylans, to remove successive D-xylose residues from the non-reducing termini.. The protein operates within glycan degradation; xylan degradation. Its function is as follows. Xylan 1,4-beta-xylosidase involved in the hydrolysis of xylan, a major structural heterogeneous polysaccharide found in plant biomass representing the second most abundant polysaccharide in the biosphere, after cellulose. This is Probable exo-1,4-beta-xylosidase xlnD (xlnD) from Aspergillus flavus (strain ATCC 200026 / FGSC A1120 / IAM 13836 / NRRL 3357 / JCM 12722 / SRRC 167).